The following is a 192-amino-acid chain: Putative acetyltransferase YjbC (192 aa).

Positions 1 to 139 (MNWYEKLSEY…MEILYWSPKT (139 aa)) constitute an N-acetyltransferase domain.

The protein localises to the cytoplasm. This chain is Putative acetyltransferase YjbC (yjbC), found in Bacillus subtilis (strain 168).